The primary structure comprises 508 residues: Proto-oncogene tyrosine-protein kinase LCK (508 aa).

G2 is lipidated: N-myristoyl glycine. Residues C3 and C5 are each lipidated (S-palmitoyl cysteine). Residues 60–120 (LQDKLVVALY…PHNFVAMVNS (61 aa)) form the SH3 domain. Residues 126 to 223 (WFFKNLSRKN…GLCTRLGKPC (98 aa)) form the SH2 domain. The 254-residue stretch at 244–497 (LKLVEKLGAG…YMKSVLEDFF (254 aa)) folds into the Protein kinase domain. ATP is bound by residues 250 to 258 (LGAGQFGEV) and K272. D363 (proton acceptor) is an active-site residue. The residue at position 393 (Y393) is a Phosphotyrosine; by autocatalysis. Y504 is modified (phosphotyrosine).

It belongs to the protein kinase superfamily. Tyr protein kinase family. SRC subfamily. Binds to the cytoplasmic domain of cell surface receptors, such as CD4, CD8. In terms of processing, phosphorylated on Tyr-393, which increases enzymatic activity, this site is dephosphorylated by PTN22. Phosphorylated on Tyr-504, presumably by CSK, which decreases activity. Dephosphorylated by PTPRC/CD45. Dephosphorylation at Tyr-393 by PTPN2 negatively regulates T-cells differentiation. Palmitoylation regulates association with the plasma membrane.

The protein localises to the cell membrane. Its subcellular location is the cytoplasm. It is found in the cytosol. It carries out the reaction L-tyrosyl-[protein] + ATP = O-phospho-L-tyrosyl-[protein] + ADP + H(+). With respect to regulation, inhibited by tyrosine phosphorylation. In terms of biological role, tyrosine kinase that plays an essential role for the selection and maturation of developing T-cell in the thymus and in mature T-cell function. Is constitutively associated with the cytoplasmic portions of the CD4 and CD8 surface receptors and plays a key role in T-cell antigen receptor(TCR)-linked signal transduction pathways. This is Proto-oncogene tyrosine-protein kinase LCK (LCK) from Gallus gallus (Chicken).